The chain runs to 193 residues: Peptidyl-tRNA hydrolase (193 aa).

Residue Tyr14 coordinates tRNA. His19 (proton acceptor) is an active-site residue. Positions 64, 66, and 112 each coordinate tRNA.

The protein belongs to the PTH family. As to quaternary structure, monomer.

Its subcellular location is the cytoplasm. The catalysed reaction is an N-acyl-L-alpha-aminoacyl-tRNA + H2O = an N-acyl-L-amino acid + a tRNA + H(+). Functionally, hydrolyzes ribosome-free peptidyl-tRNAs (with 1 or more amino acids incorporated), which drop off the ribosome during protein synthesis, or as a result of ribosome stalling. Its function is as follows. Catalyzes the release of premature peptidyl moieties from peptidyl-tRNA molecules trapped in stalled 50S ribosomal subunits, and thus maintains levels of free tRNAs and 50S ribosomes. In Bartonella henselae (strain ATCC 49882 / DSM 28221 / CCUG 30454 / Houston 1) (Rochalimaea henselae), this protein is Peptidyl-tRNA hydrolase.